Reading from the N-terminus, the 281-residue chain is Ribulose-5-phosphate-3-epimerase, chloroplastic (281 aa).

Residues 1-45 (MSTSAASLCCSSTQVNGFGLRPERSLLYQPTSFSFSRRRTHGIVK) constitute a chloroplast transit peptide. A substrate-binding site is contributed by serine 63. 3 residues coordinate a divalent metal cation: histidine 88, aspartate 90, and histidine 121. The active-site Proton acceptor is the aspartate 90. Substrate is bound by residues histidine 121, 199 to 202 (GFGG), 232 to 234 (DGG), and 254 to 256 (GSA). Aspartate 232 is a binding site for a divalent metal cation. The active-site Proton donor is the aspartate 232.

It belongs to the ribulose-phosphate 3-epimerase family. As to quaternary structure, homooctamer. Requires Co(2+) as cofactor. Fe(2+) serves as cofactor. Mn(2+) is required as a cofactor. The cofactor is Zn(2+). In terms of tissue distribution, present in roots, seeds and flowers. Accumulates in nematode feeding sites (NFS).

The protein resides in the plastid. It is found in the chloroplast thylakoid membrane. The catalysed reaction is D-ribulose 5-phosphate = D-xylulose 5-phosphate. It functions in the pathway carbohydrate biosynthesis; Calvin cycle. Essential protein required during embryogenesis. Catalyzes the reversible epimerization of D-ribulose 5-phosphate to D-xylulose 5-phosphate. Essential for the early steps of nematode feeding sites (NFS, multinucleated root cells) formation induced by the root-knot nematodes Heterodera schachtii, Meloidogyne incognita, M.javanica and M.hapla. This Arabidopsis thaliana (Mouse-ear cress) protein is Ribulose-5-phosphate-3-epimerase, chloroplastic.